A 314-amino-acid polypeptide reads, in one-letter code: Small glutamine-rich tetratricopeptide repeat-containing protein alpha (314 aa).

The tract at residues 65–99 (ATASKEMPQDPRGPDRTPPSEEDSAEAERLKTEGN) is disordered. Positions 71 to 83 (MPQDPRGPDRTPP) are enriched in basic and acidic residues. Phosphothreonine is present on T81. Phosphoserine is present on S84. The span at 90-99 (EAERLKTEGN) shows a compositional bias: basic and acidic residues. 3 TPR repeats span residues 91–124 (AERL…NPAN), 125–158 (AVYF…DPGY), and 159–192 (SKAY…DPDN). K137 carries the N6-acetyllysine modification. The segment at 249–268 (GMISGGHNPLGTPGSSPQHS) is disordered. S302 is subject to Phosphoserine. T304 is subject to Phosphothreonine. A Phosphoserine modification is found at S306.

This sequence belongs to the SGT family. As to quaternary structure, homodimer. Homooligomer. Interacts with DNAJC5 and DNAJC5B. Interacts (via TPR repeats) with HSP90AA1. Interacts (via Gln-rich region) with SLC2A1. Interacts with HSP90AB1. Interacts (via TPR repeats) with HSPA8/Hsc70; the interaction is direct. Interacts with BAG6 (via ubiquitin-like domain); interaction prevents interaction between BAG6 and RNF126. Forms a multiprotein complex, at least composed of DNAJB12, DNAJB14, HSPA8/Hsc70 and SGTA; interaction with DNAJB14 and HSPA8/Hsc70 is direct. (Microbial infection) Interacts with NS1 from parvovirus H-1. In terms of tissue distribution, ubiquitously expressed.

It localises to the cytoplasm. Its subcellular location is the nucleus. Co-chaperone that binds misfolded and hydrophobic patches-containing client proteins in the cytosol. Mediates their targeting to the endoplasmic reticulum but also regulates their sorting to the proteasome when targeting fails. Functions in tail-anchored/type II transmembrane proteins membrane insertion constituting with ASNA1 and the BAG6 complex a targeting module. Functions upstream of the BAG6 complex and ASNA1, binding more rapidly the transmembrane domain of newly synthesized proteins. It is also involved in the regulation of the endoplasmic reticulum-associated misfolded protein catabolic process via its interaction with BAG6: collaborates with the BAG6 complex to maintain hydrophobic substrates in non-ubiquitinated states. Competes with RNF126 for interaction with BAG6, preventing the ubiquitination of client proteins associated with the BAG6 complex. Binds directly to HSC70 and HSP70 and regulates their ATPase activity. The sequence is that of Small glutamine-rich tetratricopeptide repeat-containing protein alpha (Sgta) from Rattus norvegicus (Rat).